We begin with the raw amino-acid sequence, 718 residues long: Putative methyltransferase NSUN7 (718 aa).

The active-site Nucleophile is C439. Disordered stretches follow at residues 536-557, 578-616, and 694-718; these read GKSSKREKKKKKSKTSLTKGAT, ANLSETVTKPPLPQKNTAQVGASSQTRKPNKLAPHPAVP, and SLSRKEEKPKDDTPSSLLRPPRRWL. Basic residues predominate over residues 538-549; the sequence is SSKREKKKKKSK. The span at 591–604 shows a compositional bias: polar residues; the sequence is QKNTAQVGASSQTR. Basic and acidic residues predominate over residues 696-706; the sequence is SRKEEKPKDDT.

It belongs to the class I-like SAM-binding methyltransferase superfamily. RsmB/NOP family.

Its function is as follows. May have S-adenosyl-L-methionine-dependent methyl-transferase activity. This chain is Putative methyltransferase NSUN7 (NSUN7), found in Homo sapiens (Human).